Consider the following 216-residue polypeptide: U1 small nuclear ribonucleoprotein A (216 aa).

2 consecutive RRM domains span residues 7–86 (QTIY…YSKS) and 142–216 (QILF…FAKK). The tract at residues 97–142 (TFKERPKKVKPPKPAPGTDEKKDKKKKPSSAENSNPNAQTEQPPNQ) is disordered. Positions 126–142 (SAENSNPNAQTEQPPNQ) are enriched in polar residues.

The protein belongs to the RRM U1 A/B'' family. As to quaternary structure, belongs to the spliceosome where it is associated with snRNP U1. Interacts with the SMN complex.

The protein resides in the nucleus. Its function is as follows. Binds stem loop II of U1 snRNA. It is the first snRNP to interact with pre-mRNA. This interaction is required for the subsequent binding of U2 snRNP and the U4/U6/U5 tri-snRNP. Plays a role in regulating sex-lethal splicing. This is U1 small nuclear ribonucleoprotein A (snf) from Drosophila melanogaster (Fruit fly).